The following is a 494-amino-acid chain: MELGGAFTIFLALCFSCLLILIAWKRVQKPGRLPPGPTPIPFLGNLLQVRTDATFQSFLKLREKYGPVFTVYMGPRPVVILCGHEAVKEALVDRADEFSGRGELASVERNFQGHGVALANGERWRILRRFSLTILRDFGMGKRSIEERIQEEAGYLLEEFRKTKGAPIDPTFFLSRTVSNVISSVVFGSRFDYEDKQFLSLLRMINESFIEMSTPWAQLYDMYSGVMQYLPGRHNRIYYLIEELKDFIAARVKVNEASLDPQNPRDFIDCFLIKMHQDKNNPHTEFNLKNLVLTTLNLFFAGTETVSSTLRYGFLLIMKHPEVQTKIYEEINQVIGPHRIPSVDDRVKMPFTDAVIHEIQRLTDIVPMGVPHNVIRDTHFRGYLLPKGTDVFPLLGSVLKDPKYFCHPDDFYPQHFLDEQGRFKKNEAFVPFSSGKRICLGEAMARMELFLYFTSILQNFSLHPLVPPVNIDITPKISGFGNIPPTYELCLIAR.

Heme is bound at residue Cys439.

This sequence belongs to the cytochrome P450 family. Heme serves as cofactor. As to expression, olfactory epithelium.

It localises to the endoplasmic reticulum membrane. The protein resides in the microsome membrane. It catalyses the reaction an organic molecule + reduced [NADPH--hemoprotein reductase] + O2 = an alcohol + oxidized [NADPH--hemoprotein reductase] + H2O + H(+). In terms of biological role, cytochromes P450 are a group of heme-thiolate monooxygenases. This isozyme seems to be implicated in olfaction. The chain is Cytochrome P450 2G1 (CYP2G1) from Oryctolagus cuniculus (Rabbit).